Reading from the N-terminus, the 125-residue chain is MAVCIIDHDNIRGVIYVEQVHGKDKVLGSVIGLKSGTYSLIIHRYGDISRGCDSIGSPEIFIGNIFVNRYGVAYVYLDTDVNISTIIGKALSISKNDQRLACGVIGISYINEKIIHFLTINENGV.

Cys52 and Cys102 are joined by a disulfide.

The protein belongs to the Cu-Zn superoxide dismutase family.

The protein resides in the virion. Its subcellular location is the host cytoplasm. Functionally, superoxide dismutase-like protein with no enzymatic activity. The protein is Cu-Zn superoxide dismutase-like protein OPG175 (OPG175) of Monkeypox virus.